Consider the following 79-residue polypeptide: Acyl carrier protein 1 (79 aa).

The region spanning 2–77 (DNIEQRVKKI…QAIDYARANV (76 aa)) is the Carrier domain. O-(pantetheine 4'-phosphoryl)serine is present on Ser37.

It belongs to the acyl carrier protein (ACP) family. Post-translationally, 4'-phosphopantetheine is transferred from CoA to a specific serine of apo-ACP by AcpS. This modification is essential for activity because fatty acids are bound in thioester linkage to the sulfhydryl of the prosthetic group.

The protein resides in the cytoplasm. Its pathway is lipid metabolism; fatty acid biosynthesis. Its function is as follows. Carrier of the growing fatty acid chain in fatty acid biosynthesis. This Ralstonia nicotianae (strain ATCC BAA-1114 / GMI1000) (Ralstonia solanacearum) protein is Acyl carrier protein 1.